Consider the following 234-residue polypeptide: MTIKKIISKNDPLISILSSPLRQDLATHFLFPRELLAKFPARKDTNPRKFCLLPLEGKNHLHNKHVSLYCLLSDRYLQPPSKRIFKRWNMELNNLNCPDIKRYILESLQDSLLKEISSLKETSTQNHLHCNDIKILQDCLRRPNISNGGIWVQWNLEEINQLKKFLSFRKLYPRQSFISLLQILPEPFLKSQLSHTLPVGSKYFFVPCDKKHHTLGLLLWKLFFLKDMPAAYSS.

It is found in the cytoplasm. The protein localises to the nucleus. In Schizosaccharomyces pombe (strain 972 / ATCC 24843) (Fission yeast), this protein is Protein rgg8 (rgg8).